Here is a 410-residue protein sequence, read N- to C-terminus: Acetyltransferase aurG (410 aa).

3 helical membrane passes run 3-23 (LWLV…VVCF), 28-48 (SLVR…GLIL), and 59-79 (WSLV…VGLI). Residues 90–99 (TSSRGGQPNA) show a composition bias toward polar residues. The segment at 90–112 (TSSRGGQPNASLDLAGRKKPPSS) is disordered. Residue N98 is glycosylated (N-linked (GlcNAc...) asparagine). 4 consecutive transmembrane segments (helical) span residues 157-177 (AMTL…GGDL), 219-239 (MYFS…MVGL), 300-320 (ILAT…YSYG), and 364-384 (IGYV…FFPL).

The protein belongs to the wax synthase family.

The protein localises to the membrane. It functions in the pathway polyketide biosynthesis. In terms of biological role, acetyltransferase; part of the gene cluster that mediates the biosynthesis of aurovertins, fungal polyketides that exhibit potent inhibition of adenosine triphosphate synthase. Tha biosynthesis starts with the HR-PKS aurA that selects propionate as the starter unit; synthesizes a hexa-ene chain through the repeated functions of the KR and DH domains in the first six iterations; selectively introduces three alpha-methyl substitutions at C4, C6, and C16 using the S-adensylmethionine-dependent cMET; and shuts off KR and DH in the last three iterations to afford a 1,3,5-triketo portion that can undergo intramolecular cyclization to yield the alpha-pyrone intermediate. AurE may act as a cyclase and enhances the rate of pyrone formation and product release of aurA. The methyltransferase aurB then methylates the C17 hydroxyl group. C17 methylation is required to initiate epoxidation by the downstream monooxygenase aurC. The monooxygenase aurC and the epoxide hydrolase aurD can iteratively transform the terminal triene portion of the methylated precursor into the dioxabicyclo[3.2.1]octane scaffold of aurovertin E. Epoxidation modifications of the precursor occur in two separate steps; bis-epoxidation of the two terminal olefins takes place first, followed by another epoxidation that occurs at C7-C8 after tetrahydrofuran formation. The O-acyltransferase aurG converts aurovertin E to aurovertin A. The sequence is that of Acetyltransferase aurG from Calcarisporium arbuscula (Dendryphion arbuscula).